Consider the following 436-residue polypeptide: NADH-quinone oxidoreductase subunit D 1 (436 aa).

The protein belongs to the complex I 49 kDa subunit family. As to quaternary structure, NDH-1 is composed of 14 different subunits. Subunits NuoB, C, D, E, F, and G constitute the peripheral sector of the complex.

Its subcellular location is the cell inner membrane. The catalysed reaction is a quinone + NADH + 5 H(+)(in) = a quinol + NAD(+) + 4 H(+)(out). In terms of biological role, NDH-1 shuttles electrons from NADH, via FMN and iron-sulfur (Fe-S) centers, to quinones in the respiratory chain. The immediate electron acceptor for the enzyme in this species is believed to be ubiquinone. Couples the redox reaction to proton translocation (for every two electrons transferred, four hydrogen ions are translocated across the cytoplasmic membrane), and thus conserves the redox energy in a proton gradient. This is NADH-quinone oxidoreductase subunit D 1 from Stenotrophomonas maltophilia (strain R551-3).